Reading from the N-terminus, the 307-residue chain is Pyridoxal 5'-phosphate synthase subunit PdxS (307 aa).

Asp-37 lines the D-ribose 5-phosphate pocket. The active-site Schiff-base intermediate with D-ribose 5-phosphate is Lys-94. Gly-166 provides a ligand contact to D-ribose 5-phosphate. Arg-178 contributes to the D-glyceraldehyde 3-phosphate binding site. D-ribose 5-phosphate-binding positions include Gly-227 and 248 to 249 (GS).

The protein belongs to the PdxS/SNZ family. As to quaternary structure, in the presence of PdxT, forms a dodecamer of heterodimers.

The catalysed reaction is aldehydo-D-ribose 5-phosphate + D-glyceraldehyde 3-phosphate + L-glutamine = pyridoxal 5'-phosphate + L-glutamate + phosphate + 3 H2O + H(+). Its pathway is cofactor biosynthesis; pyridoxal 5'-phosphate biosynthesis. Catalyzes the formation of pyridoxal 5'-phosphate from ribose 5-phosphate (RBP), glyceraldehyde 3-phosphate (G3P) and ammonia. The ammonia is provided by the PdxT subunit. Can also use ribulose 5-phosphate and dihydroxyacetone phosphate as substrates, resulting from enzyme-catalyzed isomerization of RBP and G3P, respectively. The chain is Pyridoxal 5'-phosphate synthase subunit PdxS from Mycobacterium leprae (strain Br4923).